We begin with the raw amino-acid sequence, 571 residues long: Proline--tRNA ligase (571 aa).

Belongs to the class-II aminoacyl-tRNA synthetase family. ProS type 1 subfamily. As to quaternary structure, homodimer.

It localises to the cytoplasm. The catalysed reaction is tRNA(Pro) + L-proline + ATP = L-prolyl-tRNA(Pro) + AMP + diphosphate. Catalyzes the attachment of proline to tRNA(Pro) in a two-step reaction: proline is first activated by ATP to form Pro-AMP and then transferred to the acceptor end of tRNA(Pro). As ProRS can inadvertently accommodate and process non-cognate amino acids such as alanine and cysteine, to avoid such errors it has two additional distinct editing activities against alanine. One activity is designated as 'pretransfer' editing and involves the tRNA(Pro)-independent hydrolysis of activated Ala-AMP. The other activity is designated 'posttransfer' editing and involves deacylation of mischarged Ala-tRNA(Pro). The misacylated Cys-tRNA(Pro) is not edited by ProRS. The polypeptide is Proline--tRNA ligase (Pseudomonas syringae pv. syringae (strain B728a)).